A 391-amino-acid polypeptide reads, in one-letter code: Nucleosome assembly protein 1-like 1 (391 aa).

Positions 1 to 10 are enriched in basic and acidic residues; it reads MADIDNKEQS. The disordered stretch occupies residues 1-32; that stretch reads MADIDNKEQSELDQDLDDVEEVEEEETGEETK. A2 is modified (N-acetylalanine). Phosphoserine is present on S10. Positions 11–28 are enriched in acidic residues; sequence ELDQDLDDVEEVEEEETG. A phosphothreonine mark is found at T62 and T64. Residue S69 is modified to Phosphoserine. The residue at position 116 (K116) is an N6-acetyllysine. The NAP1L motif signature appears at 125-150; it reads YEPTEEECEWKPDEEDEISEELKEKA. A compositionally biased stretch (acidic residues) spans 132–143; the sequence is CEWKPDEEDEIS. The segment at 132 to 163 is disordered; the sequence is CEWKPDEEDEISEELKEKAKIEDEKKDEEKED. A Phosphoserine modification is found at S143. Residues 144-163 are compositionally biased toward basic and acidic residues; it reads EELKEKAKIEDEKKDEEKED. Positions 273–279 match the Nuclear localization signal motif; that stretch reads IKKKQKH. A compositionally biased stretch (acidic residues) spans 346-376; sequence AIEDDDDDYDEEGEEADEEGEEEGDEENDPD. The tract at residues 346–391 is disordered; that stretch reads AIEDDDDDYDEEGEEADEEGEEEGDEENDPDYDPKKDQNPAECKQQ. 2 positions are modified to 5-glutamyl polyglycine: E359 and E360. A compositionally biased stretch (basic and acidic residues) spans 377 to 391; the sequence is YDPKKDQNPAECKQQ. C388 is modified (cysteine methyl ester). C388 carries S-farnesyl cysteine lipidation. A propeptide spans 389 to 391 (removed in mature form); it reads KQQ.

The protein belongs to the nucleosome assembly protein (NAP) family. Homodimer. The dimer binds strongly and sequentially to single and double H2A-H2B heterodimers. Interacts with ERCC6; this interaction increases ERCC6 processivity. Interacts with RAD54. Interacts with SETD1A. Post-translationally, polyglycylated by TTLL10 on glutamate residues, resulting in polyglycine chains on the gamma-carboxyl group. Both polyglutamylation and polyglycylation modifications can coexist on the same protein on adjacent residues, and lowering polyglycylation levels increases polyglutamylation, and reciprocally. In terms of processing, polyglutamylated by TTLL4 on glutamate residues, resulting in polyglutamate chains on the gamma-carboxyl group. Both polyglutamylation and polyglycylation modifications can coexist on the same protein on adjacent residues, and lowering polyglycylation levels increases polyglutamylation, and reciprocally.

The protein resides in the nucleus. The protein localises to the melanosome. Its subcellular location is the cytoplasm. Histone chaperone that plays a role in the nuclear import of H2A-H2B and nucleosome assembly. Also participates in several important DNA repair mechanisms: greatly enhances ERCC6-mediated chromatin remodeling which is essential for transcription-coupled nucleotide excision DNA repair. Also stimulates homologous recombination (HR) by RAD51 and RAD54 which is essential in mitotic DNA double strand break (DSB) repair. Plays a key role in the regulation of embryonic neurogenesis. Promotes the proliferation of neural progenitors and inhibits neuronal differentiation during cortical development. Regulates neurogenesis via the modulation of RASSF10; regulates RASSF10 expression by promoting SETD1A-mediated H3K4 methylation at the RASSF10 promoter. In Pongo abelii (Sumatran orangutan), this protein is Nucleosome assembly protein 1-like 1 (NAP1L1).